The sequence spans 153 residues: Large ribosomal subunit protein uL22 (153 aa).

It belongs to the universal ribosomal protein uL22 family. Part of the 50S ribosomal subunit.

Its function is as follows. This protein binds specifically to 23S rRNA. It makes multiple contacts with different domains of the 23S rRNA in the assembled 50S subunit and ribosome. The globular domain of the protein is located near the polypeptide exit tunnel on the outside of the subunit, while an extended beta-hairpin is found that lines the wall of the exit tunnel in the center of the 70S ribosome. The polypeptide is Large ribosomal subunit protein uL22 (Methanococcus vannielii (strain ATCC 35089 / DSM 1224 / JCM 13029 / OCM 148 / SB)).